We begin with the raw amino-acid sequence, 444 residues long: UDP-N-acetylmuramoylalanine--D-glutamate ligase (444 aa).

109–115 (GSNGKTT) is an ATP binding site.

This sequence belongs to the MurCDEF family.

The protein resides in the cytoplasm. It carries out the reaction UDP-N-acetyl-alpha-D-muramoyl-L-alanine + D-glutamate + ATP = UDP-N-acetyl-alpha-D-muramoyl-L-alanyl-D-glutamate + ADP + phosphate + H(+). Its pathway is cell wall biogenesis; peptidoglycan biosynthesis. Cell wall formation. Catalyzes the addition of glutamate to the nucleotide precursor UDP-N-acetylmuramoyl-L-alanine (UMA). This Bacteroides fragilis (strain ATCC 25285 / DSM 2151 / CCUG 4856 / JCM 11019 / LMG 10263 / NCTC 9343 / Onslow / VPI 2553 / EN-2) protein is UDP-N-acetylmuramoylalanine--D-glutamate ligase.